The primary structure comprises 260 residues: DNA repair protein RecO (260 aa).

It belongs to the RecO family.

Involved in DNA repair and RecF pathway recombination. This chain is DNA repair protein RecO, found in Chlorobaculum parvum (strain DSM 263 / NCIMB 8327) (Chlorobium vibrioforme subsp. thiosulfatophilum).